Consider the following 480-residue polypeptide: Islet cell autoantigen 1 (480 aa).

The region spanning 50-253 is the AH domain; sequence ASDADLDAKL…TSHTMAAIHE (204 aa). Basic and acidic residues-rich tracts occupy residues 276–293 and 306–321; these read LVEKEKKKSSRRENREAV and ENQHKESSTCQKEEGK. 2 disordered regions span residues 276–338 and 400–421; these read LVEK…ACSG and LKEPAPMGAQGEPDPKPQIGSA.

The protein localises to the cytoplasm. The protein resides in the cytosol. Its subcellular location is the golgi apparatus membrane. It is found in the cytoplasmic vesicle. It localises to the secretory vesicle membrane. The protein localises to the secretory vesicle. The protein resides in the synaptic vesicle membrane. In terms of biological role, may play a role in neurotransmitter secretion. The polypeptide is Islet cell autoantigen 1 (Rattus norvegicus (Rat)).